A 174-amino-acid chain; its full sequence is 2-C-methyl-D-erythritol 2,4-cyclodiphosphate synthase (174 aa).

A divalent metal cation is bound by residues Asp13, His15, and His61. A 4-CDP-2-C-methyl-D-erythritol 2-phosphate-binding site is contributed by 13–15; sequence DAH. 4-CDP-2-C-methyl-D-erythritol 2-phosphate-binding positions include 75–77, 149–152, Phe156, and Arg159; these read DIG and TTTD.

The protein belongs to the IspF family. In terms of assembly, homotrimer. Requires a divalent metal cation as cofactor.

It carries out the reaction 4-CDP-2-C-methyl-D-erythritol 2-phosphate = 2-C-methyl-D-erythritol 2,4-cyclic diphosphate + CMP. It participates in isoprenoid biosynthesis; isopentenyl diphosphate biosynthesis via DXP pathway; isopentenyl diphosphate from 1-deoxy-D-xylulose 5-phosphate: step 4/6. In terms of biological role, involved in the biosynthesis of isopentenyl diphosphate (IPP) and dimethylallyl diphosphate (DMAPP), two major building blocks of isoprenoid compounds. Catalyzes the conversion of 4-diphosphocytidyl-2-C-methyl-D-erythritol 2-phosphate (CDP-ME2P) to 2-C-methyl-D-erythritol 2,4-cyclodiphosphate (ME-CPP) with a corresponding release of cytidine 5-monophosphate (CMP). The sequence is that of 2-C-methyl-D-erythritol 2,4-cyclodiphosphate synthase from Bifidobacterium longum subsp. infantis (strain ATCC 15697 / DSM 20088 / JCM 1222 / NCTC 11817 / S12).